The following is a 658-amino-acid chain: D-ornithine--citrate ligase (658 aa).

It belongs to the IucA/IucC family.

The enzyme catalyses D-ornithine + citrate + ATP = N(5)-[(S)-citryl]-D-ornithine + AMP + diphosphate + H(+). Its pathway is siderophore biosynthesis. Functionally, involved in the biosynthesis of the siderophore staphyloferrin A. Catalyzes the ATP-dependent condensation of D-ornithine and citrate to form a citryl-D-ornithine intermediate. The sequence is that of D-ornithine--citrate ligase from Staphylococcus aureus (strain NCTC 8325 / PS 47).